The sequence spans 951 residues: Zinc fingers and homeoboxes protein 3 (951 aa).

Residues 1–66 (MASKRKSTTP…SSTDGSALAN (66 aa)) form a disordered region. Residues 1 to 107 (MASKRKSTTP…SEHTDFNKDP (107 aa)) form a required for nuclear localization region. Positions 42–58 (PSEAPDASSEAAPNPSS) are enriched in low complexity. C2H2-type zinc fingers lie at residues 77–100 (YCCKECEFRSQDVTHFIGHMNSEH) and 109–132 (FVCTGCSFLAKNPEGLSLHNAKCH). A disordered region spans residues 227–252 (TFINGAAPGSQASAKSTKPPPAANGP). The required for homodimerization and interaction with NFYA stretch occupies residues 238–483 (ASAKSTKPPP…LLTACPSITS (246 aa)). Positions 299-497 (LSSIPTYNAA…DANIYKNKKS (199 aa)) are required for repressor activity. 2 DNA-binding regions (homeobox) span residues 300–359 (SSIP…GISW) and 489–548 (ANIY…RNLK). A required for nuclear localization region spans residues 492–550 (YKNKKSHEQLSALKGSFCRNQFPGQSEVEHLTKVTGLSTREVRKWFSDRRYHCRNLKGS). Position 599 is a phosphoserine (Ser-599). Residues 607 to 666 (TPTKYKERAPEQLRVLENSFAQNPLPPEEELDRLRSETKMTRREIDGWFSERRKKVNTEE) constitute a DNA-binding region (homeobox 3). Over residues 662–676 (VNTEETKKADGHMPK) the composition is skewed to basic and acidic residues. The tract at residues 662–690 (VNTEETKKADGHMPKEEEEGAEQEGRDEE) is disordered. Residues 677 to 690 (EEEEGAEQEGRDEE) are compositionally biased toward acidic residues. 2 positions are modified to phosphoserine: Ser-703 and Ser-718. 2 consecutive DNA-binding regions (homeobox) follow at residues 759-818 (PSKV…KNGQ) and 830-889 (FPPG…TRAV). A disordered region spans residues 916 to 951 (SELSENSESWEPSAPEASSEPFDTSSPQSGRQLEAD). A compositionally biased stretch (low complexity) spans 919–936 (SENSESWEPSAPEASSEP). Residues Ser-922 and Ser-941 each carry the phosphoserine modification. Over residues 937-951 (FDTSSPQSGRQLEAD) the composition is skewed to polar residues.

It belongs to the ZHX family. In terms of assembly, homodimer (via homeobox domain 1). Heterodimer with ZHX1 (via homeobox domain 1). Heterodimer with ZHX2 (via homeobox domain 1). Heterodimerization with ZHX1 is a prerequisite for repressor activity. Interacts with NFYA. In terms of tissue distribution, ubiquitously expressed.

Its subcellular location is the nucleus. Functionally, acts as a transcriptional repressor. Involved in the early stages of mesenchymal stem cell (MSC) osteogenic differentiation. Is a regulator of podocyte gene expression during primary glomerula disease. Binds to promoter DNA. The chain is Zinc fingers and homeoboxes protein 3 (Zhx3) from Mus musculus (Mouse).